The sequence spans 260 residues: Ubiquinone/menaquinone biosynthesis C-methyltransferase UbiE (260 aa).

Residues T83, D104, and 132–133 each bind S-adenosyl-L-methionine; that span reads NA.

It belongs to the class I-like SAM-binding methyltransferase superfamily. MenG/UbiE family.

The catalysed reaction is a 2-demethylmenaquinol + S-adenosyl-L-methionine = a menaquinol + S-adenosyl-L-homocysteine + H(+). It catalyses the reaction a 2-methoxy-6-(all-trans-polyprenyl)benzene-1,4-diol + S-adenosyl-L-methionine = a 5-methoxy-2-methyl-3-(all-trans-polyprenyl)benzene-1,4-diol + S-adenosyl-L-homocysteine + H(+). The protein operates within quinol/quinone metabolism; menaquinone biosynthesis; menaquinol from 1,4-dihydroxy-2-naphthoate: step 2/2. Its pathway is cofactor biosynthesis; ubiquinone biosynthesis. In terms of biological role, methyltransferase required for the conversion of demethylmenaquinol (DMKH2) to menaquinol (MKH2) and the conversion of 2-polyprenyl-6-methoxy-1,4-benzoquinol (DDMQH2) to 2-polyprenyl-3-methyl-6-methoxy-1,4-benzoquinol (DMQH2). The chain is Ubiquinone/menaquinone biosynthesis C-methyltransferase UbiE from Bartonella henselae (strain ATCC 49882 / DSM 28221 / CCUG 30454 / Houston 1) (Rochalimaea henselae).